Reading from the N-terminus, the 395-residue chain is Tryptophan synthase beta chain (395 aa).

At lysine 86 the chain carries N6-(pyridoxal phosphate)lysine.

Belongs to the TrpB family. As to quaternary structure, tetramer of two alpha and two beta chains. Pyridoxal 5'-phosphate serves as cofactor.

It carries out the reaction (1S,2R)-1-C-(indol-3-yl)glycerol 3-phosphate + L-serine = D-glyceraldehyde 3-phosphate + L-tryptophan + H2O. Its pathway is amino-acid biosynthesis; L-tryptophan biosynthesis; L-tryptophan from chorismate: step 5/5. Its function is as follows. The beta subunit is responsible for the synthesis of L-tryptophan from indole and L-serine. This Psychromonas ingrahamii (strain DSM 17664 / CCUG 51855 / 37) protein is Tryptophan synthase beta chain.